A 357-amino-acid chain; its full sequence is Transcription factor PCF6 (357 aa).

The interval 1–29 (MEAAVGDGEGGGGGGGRGKRGRGGGGGEM) is disordered. The segment covering 7-16 (DGEGGGGGGG) has biased composition (gly residues). The TCP domain occupies 52-110 (GKDRHSKVYTAKGIRDRRVRLSVATAIQFYDLQDRLGFDQPSKAIEWLINAASPAIDTL). 2 disordered regions span residues 125 to 162 (AADA…DKEV) and 281 to 307 (ANRG…QQLQ). 2 stretches are compositionally biased toward polar residues: residues 142-155 (LSNK…SETS) and 284-295 (GTLQSNSPSNMS).

Forms homodimers and heterodimers.

It is found in the nucleus. Its function is as follows. Transcription activator. Binds the promoter core sequence 5'-GGNCC-3'. This is Transcription factor PCF6 (PCF6) from Oryza sativa subsp. japonica (Rice).